The following is a 390-amino-acid chain: Mannitol-1-phosphate 5-dehydrogenase (390 aa).

Residue 7–18 (AVHFGGGNIGRG) coordinates NAD(+). Lys216 is an active-site residue.

The protein belongs to the mannitol dehydrogenase family. As to quaternary structure, monomer.

It catalyses the reaction D-mannitol 1-phosphate + NAD(+) = beta-D-fructose 6-phosphate + NADH + H(+). Catalyzes the NAD(H)-dependent interconversion of D-fructose 6-phosphate and D-mannitol 1-phosphate in the mannitol metabolic pathway. Has a strong preference for NADH over NADPH. The chain is Mannitol-1-phosphate 5-dehydrogenase from Alternaria alternata (Alternaria rot fungus).